The chain runs to 378 residues: Quinolinate synthase (378 aa).

The iminosuccinate site is built by His-59 and Ser-80. Residue Cys-125 coordinates [4Fe-4S] cluster. Iminosuccinate-binding positions include 151 to 153 (YAN) and Ser-168. Residue Cys-212 participates in [4Fe-4S] cluster binding. Iminosuccinate-binding positions include 238-240 (HPE) and Thr-255. Residue Cys-309 participates in [4Fe-4S] cluster binding.

Belongs to the quinolinate synthase family. Type 1 subfamily. Requires [4Fe-4S] cluster as cofactor.

Its subcellular location is the cytoplasm. The catalysed reaction is iminosuccinate + dihydroxyacetone phosphate = quinolinate + phosphate + 2 H2O + H(+). Its pathway is cofactor biosynthesis; NAD(+) biosynthesis; quinolinate from iminoaspartate: step 1/1. Functionally, catalyzes the condensation of iminoaspartate with dihydroxyacetone phosphate to form quinolinate. In Burkholderia lata (strain ATCC 17760 / DSM 23089 / LMG 22485 / NCIMB 9086 / R18194 / 383), this protein is Quinolinate synthase.